Consider the following 384-residue polypeptide: Putative 8-amino-7-oxononanoate synthase (384 aa).

Arg-19 serves as a coordination point for substrate. 106 to 107 (GY) provides a ligand contact to pyridoxal 5'-phosphate. His-131 serves as a coordination point for substrate. Pyridoxal 5'-phosphate is bound by residues Ser-177, 202-205 (DDAH), and 233-236 (TLSK). Lys-236 is modified (N6-(pyridoxal phosphate)lysine).

The protein belongs to the class-II pyridoxal-phosphate-dependent aminotransferase family. BioF subfamily. Homodimer. Pyridoxal 5'-phosphate is required as a cofactor.

It catalyses the reaction 6-carboxyhexanoyl-[ACP] + L-alanine + H(+) = (8S)-8-amino-7-oxononanoate + holo-[ACP] + CO2. The protein operates within cofactor biosynthesis; biotin biosynthesis. In terms of biological role, catalyzes the decarboxylative condensation of pimeloyl-[acyl-carrier protein] and L-alanine to produce 8-amino-7-oxononanoate (AON), [acyl-carrier protein], and carbon dioxide. This chain is Putative 8-amino-7-oxononanoate synthase (bioF), found in Desulforudis audaxviator (strain MP104C).